Reading from the N-terminus, the 2541-residue chain is Highly reducing polyketide synthase otaA (2541 aa).

The Ketosynthase family 3 (KS3) domain maps to S9–D431. Catalysis depends on for beta-ketoacyl synthase activity residues C182, H317, and H355. The Malonyl-CoA:ACP transacylase (MAT) domain maps to F571–D888. An N-terminal hotdog fold region spans residues H957–H1092. Residues H957–S1251 form a dehydratase (DH) domain region. One can recognise a PKS/mFAS DH domain in the interval H957–A1254. Residues T1108–A1254 form a C-terminal hotdog fold region. S-adenosyl-L-methionine is bound by residues I1420 and E1442. A methyltransferase (CMeT) domain region spans residues H1433–Q1605. The Enoyl reductase (ER) domain maps to H1838–L2141. The 180-residue stretch at A2165–V2344 folds into the Ketoreductase (KR) domain. One can recognise a Carrier domain in the interval D2453–S2530. S2490 bears the O-(pantetheine 4'-phosphoryl)serine mark.

It depends on pantetheine 4'-phosphate as a cofactor.

The catalysed reaction is 4 malonyl-CoA + acetyl-CoA + 5 NADPH + 9 H(+) = 7-methylmellein + 3 CO2 + 5 NADP(+) + 5 CoA + 4 H2O. It participates in mycotoxin biosynthesis. Its function is as follows. Highly reducing polyketide synthase; part of the gene cluster that mediates the biosynthesis of ochratoxin A (OTA), a mycotoxin composed of a chlorinated type I polyketide dihydroisocoumarin moiety linked to L-phenylalanine, and demonstrated to have nephrotoxic, immunotoxic, genotoxic, neurotoxic, and teratogenic properties. OtaA catalyzes the condensation of one acetate and 4 malonate units to form the isocoumarin group. The pathway begins with the highly reducing polyketide synthase otaA that catalyzes the formation of the isocoumarin group during the initial stages of biosynthesis, starting from one acetate and 4 malonate units, to originate the characteristic pentaketide skeleton 7-methylmellein (7-MM) of the OTA molecule. The newly identified cyclase otaY might be involved in the polyketide cyclization reaction during the initial steps of the OTA biosynthesis. 7-MM is then oxidized into 7-carboxymellein (also called ochratoxin beta) by the cytochrome P450 monooxygenase otaC. The NRPS encoded by the otaB gene is involved in the linking of phenylalanine to the dihydroisocoumarin ring. The reaction catalyzed by NRPS results in the production of ochratoxin B (OTB), which is the non-chlorinated analog of OTA and which subsequently serves as the substrate of the halogenase otaD for chlorination activity to form the final molecular structure of OTA, containing a chlorine atom in the C-5 position of the molecule. This Aspergillus carbonarius (strain ITEM 5010) protein is Highly reducing polyketide synthase otaA.